The chain runs to 421 residues: MRVLVLGGGVVGVASAYYLARAGHEVTVLDRQPGAGLETSFANAGQVSPGYSAPWAAPGIPLKAMKWLMMRHRPLVLWPRLEPRLYGWLAQMLANCTEEAYRRNKGRMVRLAEFSRDALRELRAETGIAYDHREKGTLQLFRTRKQLDHVGEDTSVLDEYGVAYEVLDEGGCIAAEPALARVRGGFVGGLRLPGDETGDAHLFTQRLAAICARRGVSFRYGVTVARLRHEAGRITGVETGTGEVLTADAYVAAMGSYTPALLRPLGLALPVYPVKGYSLTLPVTDESAAPVSTVMDETFKVAITRLGDRIRVGGTAELAGFSGTLRGPRRATLERSLRDLFPAGGDARQAQFWTGLRPMTPDGTPIVGPTVYDNLYTNTGHGTLGWTMACGSGRLLADLITGRAPEIAHEDLSGARYLKAA.

3 to 17 (VLVLGGGVVGVASAY) contacts FAD.

The protein belongs to the DadA oxidoreductase family. It depends on FAD as a cofactor.

The catalysed reaction is a D-alpha-amino acid + A + H2O = a 2-oxocarboxylate + AH2 + NH4(+). It functions in the pathway amino-acid degradation; D-alanine degradation; NH(3) and pyruvate from D-alanine: step 1/1. Functionally, oxidative deamination of D-amino acids. The polypeptide is D-amino acid dehydrogenase (Methylobacterium nodulans (strain LMG 21967 / CNCM I-2342 / ORS 2060)).